Here is a 427-residue protein sequence, read N- to C-terminus: Adenylosuccinate synthetase (427 aa).

Residues G12 to K18 and G40 to T42 contribute to the GTP site. D13 functions as the Proton acceptor in the catalytic mechanism. Residues D13 and G40 each coordinate Mg(2+). Residues D13–K16, N38–H41, T128, R142, Q223, T238, and R302 each bind IMP. H41 (proton donor) is an active-site residue. Residue T298–R304 participates in substrate binding. GTP-binding positions include R304, S330–D332, and S412–G414.

It belongs to the adenylosuccinate synthetase family. Homodimer. The cofactor is Mg(2+).

It localises to the cytoplasm. It carries out the reaction IMP + L-aspartate + GTP = N(6)-(1,2-dicarboxyethyl)-AMP + GDP + phosphate + 2 H(+). Its pathway is purine metabolism; AMP biosynthesis via de novo pathway; AMP from IMP: step 1/2. In terms of biological role, plays an important role in the de novo pathway of purine nucleotide biosynthesis. Catalyzes the first committed step in the biosynthesis of AMP from IMP. The polypeptide is Adenylosuccinate synthetase (Staphylococcus epidermidis (strain ATCC 35984 / DSM 28319 / BCRC 17069 / CCUG 31568 / BM 3577 / RP62A)).